The following is a 95-amino-acid chain: UPF0473 protein BPUM_2377 (95 aa).

The protein belongs to the UPF0473 family.

The sequence is that of UPF0473 protein BPUM_2377 from Bacillus pumilus (strain SAFR-032).